We begin with the raw amino-acid sequence, 323 residues long: Beta-ketoacyl-[acyl-carrier-protein] synthase III (323 aa).

Active-site residues include Cys-114 and His-250. The ACP-binding stretch occupies residues 251–255 (QANLR). The active site involves Asn-280.

It belongs to the thiolase-like superfamily. FabH family. As to quaternary structure, homodimer.

It is found in the cytoplasm. It carries out the reaction malonyl-[ACP] + acetyl-CoA + H(+) = 3-oxobutanoyl-[ACP] + CO2 + CoA. Its pathway is lipid metabolism; fatty acid biosynthesis. In terms of biological role, catalyzes the condensation reaction of fatty acid synthesis by the addition to an acyl acceptor of two carbons from malonyl-ACP. Catalyzes the first condensation reaction which initiates fatty acid synthesis and may therefore play a role in governing the total rate of fatty acid production. Possesses both acetoacetyl-ACP synthase and acetyl transacylase activities. Its substrate specificity determines the biosynthesis of branched-chain and/or straight-chain of fatty acids. The protein is Beta-ketoacyl-[acyl-carrier-protein] synthase III of Cereibacter sphaeroides (strain ATCC 17023 / DSM 158 / JCM 6121 / CCUG 31486 / LMG 2827 / NBRC 12203 / NCIMB 8253 / ATH 2.4.1.) (Rhodobacter sphaeroides).